The sequence spans 63 residues: Large ribosomal subunit protein eL37 (63 aa).

Residues cysteine 20, cysteine 23, cysteine 35, and cysteine 38 each coordinate Zn(2+). The C4-type zinc finger occupies 20 to 38; that stretch reads CRRCGRRAFNVKKGYCAAC.

It belongs to the eukaryotic ribosomal protein eL37 family. Part of the 50S ribosomal subunit. Zn(2+) is required as a cofactor.

Binds to the 23S rRNA. The chain is Large ribosomal subunit protein eL37 from Thermococcus kodakarensis (strain ATCC BAA-918 / JCM 12380 / KOD1) (Pyrococcus kodakaraensis (strain KOD1)).